The chain runs to 328 residues: MAFKEVVRVAVTGGKGQIAYNFLFALAHGDVFGVDRGVDLRIYDVPGTERALSGVRMELDDGAYPLLHRLRVTTSLNDAFDGIDAAFLIGAVPRGPGMERGDLLKQNGQIFSLQGAALNTAAKRDAKIFVVGNPVNTNCWIAMKHAPRLHRKNFHAMLRLDQNRMHSMLAHRAEVPLEEVSRVVIWGNHSAKQVPDFTQARISGKPAAEVIGDRDWLENILVHSVQNRGSAVIEARGKSSAASASRALAEAARSIFCPKSDEWFSSGVCSDHNPYGIPEDLIFGFPCRMLPSGDYEIIPGLPWEPFIRNKIQISLDEIAQEKASVSSL.

Position 13–19 (13–19 (GGKGQIA)) interacts with NAD(+). Positions 94 and 100 each coordinate substrate. NAD(+)-binding positions include N107, Q114, and 131–133 (VGN). Residues N133 and R164 each coordinate substrate. Catalysis depends on H189, which acts as the Proton acceptor.

It belongs to the LDH/MDH superfamily. MDH type 2 family.

It catalyses the reaction (S)-malate + NAD(+) = oxaloacetate + NADH + H(+). Catalyzes the reversible oxidation of malate to oxaloacetate. This Chlamydia pneumoniae (Chlamydophila pneumoniae) protein is Malate dehydrogenase.